The following is a 162-amino-acid chain: Ribosomal RNA large subunit methyltransferase H (162 aa).

Residues Leu-78, Gly-109, and 128 to 133 (LSPLTL) each bind S-adenosyl-L-methionine.

It belongs to the RNA methyltransferase RlmH family. In terms of assembly, homodimer.

Its subcellular location is the cytoplasm. The enzyme catalyses pseudouridine(1915) in 23S rRNA + S-adenosyl-L-methionine = N(3)-methylpseudouridine(1915) in 23S rRNA + S-adenosyl-L-homocysteine + H(+). In terms of biological role, specifically methylates the pseudouridine at position 1915 (m3Psi1915) in 23S rRNA. The protein is Ribosomal RNA large subunit methyltransferase H of Psychrobacter sp. (strain PRwf-1).